The following is a 245-amino-acid chain: Probable phosphatase YcdX (245 aa).

His7, His9, His15, His40, Glu73, His101, His131, Asp192, and His194 together coordinate Zn(2+).

The protein belongs to the PHP family. In terms of assembly, homotrimer. Zn(2+) serves as cofactor.

This chain is Probable phosphatase YcdX, found in Salmonella agona (strain SL483).